Consider the following 481-residue polypeptide: Glutamate--cysteine ligase (481 aa).

The protein belongs to the glutamate--cysteine ligase type 1 family. Type 1 subfamily.

The catalysed reaction is L-cysteine + L-glutamate + ATP = gamma-L-glutamyl-L-cysteine + ADP + phosphate + H(+). It participates in sulfur metabolism; glutathione biosynthesis; glutathione from L-cysteine and L-glutamate: step 1/2. This Clostridium acetobutylicum (strain ATCC 824 / DSM 792 / JCM 1419 / IAM 19013 / LMG 5710 / NBRC 13948 / NRRL B-527 / VKM B-1787 / 2291 / W) protein is Glutamate--cysteine ligase.